The primary structure comprises 227 residues: Zinc finger protein ZAT10 (227 aa).

Residues Tyr-80 to His-102 form a C2H2-type 1 zinc finger. The tract at residues Gly-96–Val-128 is disordered. Low complexity predominate over residues Thr-119–Val-128. A C2H2-type 2 zinc finger spans residues His-136–His-158. Residues Ser-168–Phe-189 form a disordered region. Positions Glu-174–His-186 are enriched in polar residues.

As to expression, expressed in roots, stems and leaves.

The protein resides in the nucleus. In terms of biological role, transcriptional repressor involved in abiotic stress responses. Can repress the stress responsive genes DREB1A and LTI78. Probably involved in jasmonate (JA) early signaling response. May regulate the expression of the JA biosynthesis gene LOX3 and control the expression of TIFY10A/JAZ1, a key repressor in the JA signaling cascade. This chain is Zinc finger protein ZAT10 (ZAT10), found in Arabidopsis thaliana (Mouse-ear cress).